Consider the following 256-residue polypeptide: MAVGKNKRLSKGKKGLKKKVVDPFSRKEWYDIKAPSTFENRNVGKTLVNKSTGLKNASDYLKGRVVEVCLADLQGSEDHSFRKVKLRVDEVQGKNLLTNFHGLDLTTDKYRSMVRKWQTLIEANVTVKTADEYVLRVFAIAFTRRQPNQVKKACYAQSSHIRAIRKVISEILTREVQNSTLAQLTSKLIPEVINKEIENATKDIFPLQNVHIRKVKLLKQPKFDLGALMTLHGEASGEEKGKKVASGFKDEILETV.

A2 is modified (N-acetylalanine; partial).

It belongs to the eukaryotic ribosomal protein eS1 family. In terms of assembly, component of the small ribosomal subunit. Mature ribosomes consist of a small (40S) and a large (60S) subunit. The 40S subunit contains about 33 different proteins and 1 molecule of RNA (18S). The 60S subunit contains about 49 different proteins and 3 molecules of RNA (25S, 5.8S and 5S).

The protein resides in the cytoplasm. The chain is Small ribosomal subunit protein eS1 from Lachancea thermotolerans (strain ATCC 56472 / CBS 6340 / NRRL Y-8284) (Yeast).